Reading from the N-terminus, the 69-residue chain is U2-agatoxin-Ao1c (69 aa).

An N-terminal signal peptide occupies residues 1–20 (MKAIISLLLISAMVFSMIEA). Residues 21–34 (VPVEEGLQLFEGER) constitute a propeptide that is removed on maturation. 3 cysteine pairs are disulfide-bonded: C36–C52, C43–C57, and C51–C67. L68 is modified (leucine amide).

Belongs to the neurotoxin 01 (U2-agtx) family. As to expression, expressed by the venom gland.

It localises to the secreted. Its function is as follows. Insect active toxin causing rapid but reversible paralysis in crickets. No activity shown in mammals. Does not show effect on mammalian voltage-gated calcium channels. The chain is U2-agatoxin-Ao1c from Agelena orientalis (Funnel-web spider).